Consider the following 375-residue polypeptide: MSEITHRTKTRPVKVGPLTIGGNNEVVIQSMTTTKTHDVEATVAEINRLAEAGCQIVRVACPDERAANAIADIKKQISIPLVVDIHFDYKLALKAIEGGADKIRINPGNIGRREKVEAVVKAAKEKGIPIRIGVNAGSLEKRILEKYGYPTADGMVESALHHIKILEDLDFHDIIVSMKASDVNLAIEAYEKASKAFDYPLHLGITESGTLFAGTVKSAAGLGAILSKGIGNTLRISLSADPVEEVKVARELLKSFGLASNAATLISCPTCGRIEIDLISIANEVEEYISKVKAPIKVAVLGCAVNGPGEAREADIGIAGARGEGLLFRKGQIVRKVPEETMVEELKKEIDKLAEEHYAKLEAEKAKAEQETQKA.

[4Fe-4S] cluster is bound by residues cysteine 268, cysteine 271, cysteine 303, and glutamate 310.

Belongs to the IspG family. [4Fe-4S] cluster serves as cofactor.

It catalyses the reaction (2E)-4-hydroxy-3-methylbut-2-enyl diphosphate + oxidized [flavodoxin] + H2O + 2 H(+) = 2-C-methyl-D-erythritol 2,4-cyclic diphosphate + reduced [flavodoxin]. It participates in isoprenoid biosynthesis; isopentenyl diphosphate biosynthesis via DXP pathway; isopentenyl diphosphate from 1-deoxy-D-xylulose 5-phosphate: step 5/6. Functionally, converts 2C-methyl-D-erythritol 2,4-cyclodiphosphate (ME-2,4cPP) into 1-hydroxy-2-methyl-2-(E)-butenyl 4-diphosphate. This Bacillus velezensis (strain DSM 23117 / BGSC 10A6 / LMG 26770 / FZB42) (Bacillus amyloliquefaciens subsp. plantarum) protein is 4-hydroxy-3-methylbut-2-en-1-yl diphosphate synthase (flavodoxin).